Consider the following 182-residue polypeptide: Transcription termination/antitermination protein NusG (182 aa).

The KOW domain occupies 131 to 163 (VGEQVRIKSGPFANQVGEVQEIETDKFKLTVLV).

This sequence belongs to the NusG family.

Participates in transcription elongation, termination and antitermination. The sequence is that of Transcription termination/antitermination protein NusG from Staphylococcus aureus (strain NCTC 8325 / PS 47).